Here is a 114-residue protein sequence, read N- to C-terminus: UPF0145 protein PF1756 (114 aa).

It belongs to the UPF0145 family.

This is UPF0145 protein PF1756 from Pyrococcus furiosus (strain ATCC 43587 / DSM 3638 / JCM 8422 / Vc1).